A 165-amino-acid polypeptide reads, in one-letter code: MRVALFPGSFDPITWGHIDLVKRASLIFDKVIVLVANNSAKSYLLSDIERYELTFEVIASLGWSRIFVDRYDGIILDYALKNNIGFIVRGVRAFHDFEFEFERYVVNNKLSPSIDIVFLPSSDKYLFVRSDLVKELIKNKNFDLSSFIPDLVQKKLKSKFIDKLS.

Ser9 contacts substrate. ATP contacts are provided by residues 9–10 (SF) and His17. Residues Lys41, Ile75, and Arg89 each contribute to the substrate site. Residues 90–92 (GVR), Glu100, and 125–131 (YLFVRSD) contribute to the ATP site.

It belongs to the bacterial CoaD family. Homohexamer. Mg(2+) serves as cofactor.

Its subcellular location is the cytoplasm. It carries out the reaction (R)-4'-phosphopantetheine + ATP + H(+) = 3'-dephospho-CoA + diphosphate. Its pathway is cofactor biosynthesis; coenzyme A biosynthesis; CoA from (R)-pantothenate: step 4/5. In terms of biological role, reversibly transfers an adenylyl group from ATP to 4'-phosphopantetheine, yielding dephospho-CoA (dPCoA) and pyrophosphate. The polypeptide is Phosphopantetheine adenylyltransferase (Borrelia turicatae (strain 91E135)).